The chain runs to 300 residues: Hydroxyacyl-thioester dehydratase type 2, mitochondrial (300 aa).

This sequence belongs to the HTD2 family.

It localises to the mitochondrion. In terms of biological role, mitochondrial 3-hydroxyacyl-thioester dehydratase involved in fatty acid biosynthesis. Required for respiratory growth and for normal mitochondrial morphology. The protein is Hydroxyacyl-thioester dehydratase type 2, mitochondrial (htd2) of Schizosaccharomyces pombe (strain 972 / ATCC 24843) (Fission yeast).